The primary structure comprises 76 residues: Conotoxin VnMKLT2-013 (76 aa).

A signal peptide spans 1–23 (MMKLTCVLIIAVLFLTACQLTTA). The propeptide occupies 24 to 42 (ETRDEYRAVRSSDEVQNSR). Positions 29–49 (YRAVRSSDEVQNSRSTDDCST) are disordered. 3 disulfide bridges follow: C47–C58, C52–C63, and C57–C72.

The protein belongs to the conotoxin O1 superfamily. In terms of tissue distribution, expressed by the venom duct.

The protein resides in the secreted. The protein is Conotoxin VnMKLT2-013 of Conus ventricosus (Mediterranean cone).